Here is a 531-residue protein sequence, read N- to C-terminus: Ribosomal protein uS12 methylthiotransferase RimO (531 aa).

Polar residues-rich tracts occupy residues 1–19 (MPNI…SQPA) and 55–67 (HNQN…SSEV). Positions 1 to 77 (MPNISTESVN…VSAASAKTTT (77 aa)) are disordered. Over residues 68–77 (VSAASAKTTT) the composition is skewed to low complexity. An MTTase N-terminal domain is found at 88 to 198 (PKIGFVSLGC…VIRAVALHVP (111 aa)). 6 residues coordinate [4Fe-4S] cluster: Cys97, Cys133, Cys162, Cys236, Cys240, and Cys243. A Radical SAM core domain is found at 222-459 (LTPSHYAYLK…MTLQQDISAQ (238 aa)). The 70-residue stretch at 462-531 (QEKIGKTLMV…EYDLFASYKG (70 aa)) folds into the TRAM domain.

Belongs to the methylthiotransferase family. RimO subfamily. [4Fe-4S] cluster is required as a cofactor.

It localises to the cytoplasm. It catalyses the reaction L-aspartate(89)-[ribosomal protein uS12]-hydrogen + (sulfur carrier)-SH + AH2 + 2 S-adenosyl-L-methionine = 3-methylsulfanyl-L-aspartate(89)-[ribosomal protein uS12]-hydrogen + (sulfur carrier)-H + 5'-deoxyadenosine + L-methionine + A + S-adenosyl-L-homocysteine + 2 H(+). Catalyzes the methylthiolation of an aspartic acid residue of ribosomal protein uS12. This Psychrobacter cryohalolentis (strain ATCC BAA-1226 / DSM 17306 / VKM B-2378 / K5) protein is Ribosomal protein uS12 methylthiotransferase RimO.